Here is a 310-residue protein sequence, read N- to C-terminus: MRIVIALGGNALLRRGEPMTAENQRQNVRIACEQIAKIWPNNELVIAHGNGPQVGLLALQGAAYTDVPTYPLDVLGAETAGMIGYMIQQELGNLVPFEVPFATLLSQVEVDINDPAFKNPTKPIGPVYTKEEAERLAKEKNWSIAQDGDKYRRVVPSPLPKRIFEIRPVKWLLEKGSIVICAGGGGIPTYYDEHHNLQGVEAVIDKDLCSALLAENLDADLFIIATDVSATFVDWGKPNQKAISVASPEAISELGFASGSMGPKVQAAINFAKQTGKDAVIGSLSDIVDIVKGKAGTRITKKTEGISYYA.

Belongs to the carbamate kinase family. As to quaternary structure, homodimer.

The protein localises to the cytoplasm. It carries out the reaction hydrogencarbonate + NH4(+) + ATP = carbamoyl phosphate + ADP + H2O + H(+). It participates in amino-acid degradation; L-arginine degradation via ADI pathway. This is Carbamate kinase from Haemophilus influenzae (strain ATCC 51907 / DSM 11121 / KW20 / Rd).